Here is a 312-residue protein sequence, read N- to C-terminus: HPr kinase/phosphorylase (312 aa).

Residues His-139 and Lys-160 contribute to the active site. 154–161 (GDSGIGKS) is a binding site for ATP. Ser-161 contacts Mg(2+). The active-site Proton acceptor; for phosphorylation activity. Proton donor; for dephosphorylation activity is the Asp-178. Positions 202 to 211 (IEIRGVGIID) are important for the catalytic mechanism of both phosphorylation and dephosphorylation. Glu-203 contacts Mg(2+). The active site involves Arg-244. The tract at residues 265–270 (PVKTGR) is important for the catalytic mechanism of dephosphorylation.

The protein belongs to the HPrK/P family. Homohexamer. Mg(2+) serves as cofactor.

The catalysed reaction is [HPr protein]-L-serine + ATP = [HPr protein]-O-phospho-L-serine + ADP + H(+). It catalyses the reaction [HPr protein]-O-phospho-L-serine + phosphate + H(+) = [HPr protein]-L-serine + diphosphate. In terms of biological role, catalyzes the ATP- as well as the pyrophosphate-dependent phosphorylation of a specific serine residue in HPr, a phosphocarrier protein of the phosphoenolpyruvate-dependent sugar phosphotransferase system (PTS). HprK/P also catalyzes the pyrophosphate-producing, inorganic phosphate-dependent dephosphorylation (phosphorolysis) of seryl-phosphorylated HPr (P-Ser-HPr). The two antagonistic activities of HprK/P are regulated by several intracellular metabolites, which change their concentration in response to the absence or presence of rapidly metabolisable carbon sources (glucose, fructose, etc.) in the growth medium. Therefore, by controlling the phosphorylation state of HPr, HPrK/P is a sensor enzyme that plays a major role in the regulation of carbon metabolism and sugar transport: it mediates carbon catabolite repression (CCR), and regulates PTS-catalyzed carbohydrate uptake and inducer exclusion. The protein is HPr kinase/phosphorylase of Streptococcus pneumoniae serotype 4 (strain ATCC BAA-334 / TIGR4).